The primary structure comprises 227 residues: Adenylate kinase (227 aa).

Residue 21 to 26 (GAGKGT) coordinates ATP. Residues 41 to 70 (ATGDMLRSQVAKQTPLGIEAKKIMDDGKLV) are NMP. AMP is bound by residues threonine 42, arginine 47, 68–70 (KLV), 97–100 (GFPR), and glutamine 104. An LID region spans residues 138–175 (GRLVHPASGRSYHKVFNPPKTEMKDDITGEDLVQRSDD). ATP is bound by residues arginine 139 and 148–149 (SY). AMP is bound by residues arginine 172 and arginine 183. Glutamine 211 is an ATP binding site.

This sequence belongs to the adenylate kinase family. AK2 subfamily. Monomer.

It is found in the cytoplasm. Its subcellular location is the cytosol. It localises to the mitochondrion intermembrane space. The enzyme catalyses AMP + ATP = 2 ADP. Functionally, catalyzes the reversible transfer of the terminal phosphate group between ATP and AMP. Plays an important role in cellular energy homeostasis and in adenine nucleotide metabolism. Adenylate kinase activity is critical for regulation of the phosphate utilization and the AMP de novo biosynthesis pathways. This chain is Adenylate kinase, found in Kluyveromyces lactis (strain ATCC 8585 / CBS 2359 / DSM 70799 / NBRC 1267 / NRRL Y-1140 / WM37) (Yeast).